Reading from the N-terminus, the 391-residue chain is 3-ketoacyl-CoA thiolase (391 aa).

The active-site Acyl-thioester intermediate is Cys95. Residues His347 and Cys377 each act as proton acceptor in the active site.

Belongs to the thiolase-like superfamily. Thiolase family. Heterotetramer of two alpha chains (FadB) and two beta chains (FadA).

Its subcellular location is the cytoplasm. It carries out the reaction an acyl-CoA + acetyl-CoA = a 3-oxoacyl-CoA + CoA. The protein operates within lipid metabolism; fatty acid beta-oxidation. In terms of biological role, catalyzes the final step of fatty acid oxidation in which acetyl-CoA is released and the CoA ester of a fatty acid two carbons shorter is formed. This chain is 3-ketoacyl-CoA thiolase, found in Pseudomonas aeruginosa (strain UCBPP-PA14).